Here is a 1786-residue protein sequence, read N- to C-terminus: Transcription initiation factor TFIID subunit 1b (1786 aa).

2 disordered regions span residues Glu-54 to Leu-83 and Phe-350 to Leu-372. The segment covering Gly-61–Leu-83 has biased composition (basic and acidic residues). The span at Ser-352–Thr-362 shows a compositional bias: polar residues. A Ubiquitin-like domain is found at Met-574–Leu-650. Over residues Met-1303–Arg-1313 the composition is skewed to basic residues. 3 disordered regions span residues Met-1303–Ala-1382, Leu-1397–Ala-1471, and Ser-1596–Gln-1634. The segment covering Thr-1357 to Ser-1377 has biased composition (polar residues). Basic residues predominate over residues Leu-1397–Ala-1407. Polar residues predominate over residues His-1433–Leu-1464. Coiled-coil stretches lie at residues Arg-1591 to Tyr-1620 and Leu-1752 to Arg-1786. The segment covering Arg-1604–Gln-1613 has biased composition (basic residues). In terms of domain architecture, Bromo spans Lys-1656–Ala-1774.

The protein belongs to the TAF1 family. As to quaternary structure, component of the TFIID complex. TFIID is composed of TATA binding protein (TBP) and a number of TBP-associated factors (TAFs) whose MWs range from 14-217 kDa. In terms of tissue distribution, expressed in roots, shoots, leaves and inflorescences.

It is found in the nucleus. TAFs are components of the transcription factor IID (TFIID) complex that is essential for mediating regulation of RNA polymerase transcription. Core scaffold of the TFIID complex. Acts as a histone acetyltransferase involved in the light regulation of growth and gene expression. Required for H3K9, H3K27, and H4K12 acetylation on the target promoters. The polypeptide is Transcription initiation factor TFIID subunit 1b (TAF1B) (Arabidopsis thaliana (Mouse-ear cress)).